We begin with the raw amino-acid sequence, 164 residues long: Thiol peroxidase (164 aa).

The region spanning 18-164 (KKVGDSAPDF…YEAVLSHLNK (147 aa)) is the Thioredoxin domain. C60 (cysteine sulfenic acid (-SOH) intermediate) is an active-site residue. C60 and C94 are disulfide-bonded.

It belongs to the peroxiredoxin family. Tpx subfamily. As to quaternary structure, homodimer.

The enzyme catalyses a hydroperoxide + [thioredoxin]-dithiol = an alcohol + [thioredoxin]-disulfide + H2O. Its function is as follows. Thiol-specific peroxidase that catalyzes the reduction of hydrogen peroxide and organic hydroperoxides to water and alcohols, respectively. Plays a role in cell protection against oxidative stress by detoxifying peroxides. In Oceanobacillus iheyensis (strain DSM 14371 / CIP 107618 / JCM 11309 / KCTC 3954 / HTE831), this protein is Thiol peroxidase.